Reading from the N-terminus, the 428-residue chain is Tyrosine--tRNA ligase (428 aa).

Tyr-41 provides a ligand contact to L-tyrosine. The 'HIGH' region signature appears at 46-55 (PTADSLHLGH). Lys-148 is subject to N6-acetyllysine. Residues Tyr-179 and Gln-183 each contribute to the L-tyrosine site. The 'KMSKS' region signature appears at 239–243 (KFGKT). Lys-242 contributes to the ATP binding site. An S4 RNA-binding domain is found at 361–418 (ADLMQALVDSELQPSRGQARKTIASNAITINGEKQSDPEYFFKEEDRLFGRFTLLRRG).

This sequence belongs to the class-I aminoacyl-tRNA synthetase family. TyrS type 1 subfamily. Homodimer.

It is found in the cytoplasm. The enzyme catalyses tRNA(Tyr) + L-tyrosine + ATP = L-tyrosyl-tRNA(Tyr) + AMP + diphosphate + H(+). Functionally, catalyzes the attachment of tyrosine to tRNA(Tyr) in a two-step reaction: tyrosine is first activated by ATP to form Tyr-AMP and then transferred to the acceptor end of tRNA(Tyr). In Escherichia coli O1:K1 / APEC, this protein is Tyrosine--tRNA ligase.